We begin with the raw amino-acid sequence, 52 residues long: Movement protein TGBp3 (52 aa).

Topologically, residues 1–3 (MHE) are lumenal. A helical transmembrane segment spans residues 4-21 (SHLVVILALLLLALWCLS). Topologically, residues 22–52 (TRPVQPSCHVEINGHSIIVTGNCWHSTQRPH) are cytoplasmic.

It belongs to the Tymovirales TGBp3 protein family.

It is found in the host endoplasmic reticulum membrane. In terms of biological role, plays a role in viral cell-to-cell propagation, by facilitating genome transport to neighboring plant cells through plasmosdesmata. May induce the formation of granular vesicles derived from the Endoplasmic reticulum, which align on actin filaments. In Foxtail mosaic virus, this protein is Movement protein TGBp3.